We begin with the raw amino-acid sequence, 830 residues long: Lon protease 3 (830 aa).

Residues 19–213 (VPLLPLRDII…RLIELMQAEI (195 aa)) form the Lon N-terminal domain. 367–374 (GPPGVGKT) contributes to the ATP binding site. The 181-residue stretch at 604-784 (RDEVGLVNGL…DDVLREALIL (181 aa)) folds into the Lon proteolytic domain. Catalysis depends on residues serine 690 and lysine 733. Low complexity predominate over residues 811–823 (PVKAPPAAAGEPT). The disordered stretch occupies residues 811-830 (PVKAPPAAAGEPTPAAPPGA).

It belongs to the peptidase S16 family. In terms of assembly, homohexamer. Organized in a ring with a central cavity.

The protein resides in the cytoplasm. It catalyses the reaction Hydrolysis of proteins in presence of ATP.. Functionally, ATP-dependent serine protease that mediates the selective degradation of mutant and abnormal proteins as well as certain short-lived regulatory proteins. Required for cellular homeostasis and for survival from DNA damage and developmental changes induced by stress. Degrades polypeptides processively to yield small peptide fragments that are 5 to 10 amino acids long. Binds to DNA in a double-stranded, site-specific manner. The polypeptide is Lon protease 3 (Sorangium cellulosum (strain So ce56) (Polyangium cellulosum (strain So ce56))).